Consider the following 127-residue polypeptide: Large ribosomal subunit protein bL12 (127 aa).

Residues 94–114 (VDGAPSTLKEAASKEEAEEAK) form a disordered region. Positions 104-114 (AASKEEAEEAK) are enriched in basic and acidic residues.

This sequence belongs to the bacterial ribosomal protein bL12 family. In terms of assembly, homodimer. Part of the ribosomal stalk of the 50S ribosomal subunit. Forms a multimeric L10(L12)X complex, where L10 forms an elongated spine to which 2 to 4 L12 dimers bind in a sequential fashion. Binds GTP-bound translation factors.

Forms part of the ribosomal stalk which helps the ribosome interact with GTP-bound translation factors. Is thus essential for accurate translation. The sequence is that of Large ribosomal subunit protein bL12 from Nitratidesulfovibrio vulgaris (strain ATCC 29579 / DSM 644 / CCUG 34227 / NCIMB 8303 / VKM B-1760 / Hildenborough) (Desulfovibrio vulgaris).